The sequence spans 206 residues: MGEVEISARAYGKMCLHASRYPHAAVNGLLLAPATGSGECLCLTDCVPLFHSHLALSVMLEVALNQVDVWGAQAGLVVAGYYHANAVLDDQSPGPLALKIAGRIAEFFPRAVLIMLDNKKLVTRPRVPPVIVLENQGLQWVPKDKNLVMWRDWEESRQMVGALLEGRAHQHLVDFDCHLDDIRQDWTNQRLNTQITQWSGSTDGNA.

The MPN domain occupies 4–139; sequence VEISARAYGK…VIVLENQGLQ (136 aa).

It belongs to the EMC8/EMC9 family. As to quaternary structure, component of the ER membrane protein complex (EMC). EMC8 and EMC9 are mutually exclusive subunits of the EMC complex.

It localises to the endoplasmic reticulum membrane. In terms of biological role, part of the endoplasmic reticulum membrane protein complex (EMC) that enables the energy-independent insertion into endoplasmic reticulum membranes of newly synthesized membrane proteins. Preferentially accommodates proteins with transmembrane domains that are weakly hydrophobic or contain destabilizing features such as charged and aromatic residues. Involved in the cotranslational insertion of multi-pass membrane proteins in which stop-transfer membrane-anchor sequences become ER membrane spanning helices. It is also required for the post-translational insertion of tail-anchored/TA proteins in endoplasmic reticulum membranes. By mediating the proper cotranslational insertion of N-terminal transmembrane domains in an N-exo topology, with translocated N-terminus in the lumen of the ER, controls the topology of multi-pass membrane proteins like the G protein-coupled receptors. By regulating the insertion of various proteins in membranes, it is indirectly involved in many cellular processes. The sequence is that of ER membrane protein complex subunit 9 (Emc9) from Mus musculus (Mouse).